The primary structure comprises 459 residues: Glutamyl-tRNA reductase (459 aa).

Substrate is bound by residues 49-52 (TCNR), S109, 114-116 (ETQ), and Q120. C50 serves as the catalytic Nucleophile. Position 189 to 194 (189 to 194 (GAGKMG)) interacts with NADP(+).

Belongs to the glutamyl-tRNA reductase family. As to quaternary structure, homodimer.

It catalyses the reaction (S)-4-amino-5-oxopentanoate + tRNA(Glu) + NADP(+) = L-glutamyl-tRNA(Glu) + NADPH + H(+). It participates in porphyrin-containing compound metabolism; protoporphyrin-IX biosynthesis; 5-aminolevulinate from L-glutamyl-tRNA(Glu): step 1/2. In terms of biological role, catalyzes the NADPH-dependent reduction of glutamyl-tRNA(Glu) to glutamate 1-semialdehyde (GSA). This Halalkalibacterium halodurans (strain ATCC BAA-125 / DSM 18197 / FERM 7344 / JCM 9153 / C-125) (Bacillus halodurans) protein is Glutamyl-tRNA reductase.